A 357-amino-acid chain; its full sequence is Chorismate synthase (357 aa).

Positions 48 and 54 each coordinate NADP(+). FMN is bound by residues 125-127 (RSS), 238-239 (NA), G278, 293-297 (KPTSS), and R319.

This sequence belongs to the chorismate synthase family. In terms of assembly, homotetramer. It depends on FMNH2 as a cofactor.

The catalysed reaction is 5-O-(1-carboxyvinyl)-3-phosphoshikimate = chorismate + phosphate. It participates in metabolic intermediate biosynthesis; chorismate biosynthesis; chorismate from D-erythrose 4-phosphate and phosphoenolpyruvate: step 7/7. Its function is as follows. Catalyzes the anti-1,4-elimination of the C-3 phosphate and the C-6 proR hydrogen from 5-enolpyruvylshikimate-3-phosphate (EPSP) to yield chorismate, which is the branch point compound that serves as the starting substrate for the three terminal pathways of aromatic amino acid biosynthesis. This reaction introduces a second double bond into the aromatic ring system. This Blochmanniella floridana protein is Chorismate synthase.